Reading from the N-terminus, the 142-residue chain is Large ribosomal subunit protein uL13 (142 aa).

This sequence belongs to the universal ribosomal protein uL13 family. As to quaternary structure, part of the 50S ribosomal subunit.

Functionally, this protein is one of the early assembly proteins of the 50S ribosomal subunit, although it is not seen to bind rRNA by itself. It is important during the early stages of 50S assembly. This chain is Large ribosomal subunit protein uL13, found in Chromohalobacter salexigens (strain ATCC BAA-138 / DSM 3043 / CIP 106854 / NCIMB 13768 / 1H11).